A 284-amino-acid polypeptide reads, in one-letter code: Large ribosomal subunit protein uL2 (284 aa).

Disordered regions lie at residues glutamate 28–serine 50 and arginine 232–lysine 284. Residues arginine 36–phenylalanine 46 are compositionally biased toward basic residues. The segment covering aspartate 240–histidine 250 has biased composition (basic and acidic residues). A compositionally biased stretch (basic residues) spans lysine 264 to lysine 284.

The protein belongs to the universal ribosomal protein uL2 family. Part of the 50S ribosomal subunit. Forms a bridge to the 30S subunit in the 70S ribosome.

In terms of biological role, one of the primary rRNA binding proteins. Required for association of the 30S and 50S subunits to form the 70S ribosome, for tRNA binding and peptide bond formation. It has been suggested to have peptidyltransferase activity; this is somewhat controversial. Makes several contacts with the 16S rRNA in the 70S ribosome. This is Large ribosomal subunit protein uL2 from Chlamydia muridarum (strain MoPn / Nigg).